A 743-amino-acid chain; its full sequence is Putative metallophosphoesterase At3g03305 (743 aa).

The first 40 residues, 1–40, serve as a signal peptide directing secretion; sequence MESIGDDDELRSKTVSLPRRISFTILLLLLLISLSTRVSG. A divalent metal cation is bound by residues Asp66, His68, and Asp101. Helical transmembrane passes span 514 to 534, 565 to 585, 623 to 643, 687 to 704, and 716 to 736; these read ILWP…CIII, MPVV…FPWF, VMVV…LVVC, LFRK…WKHF, and MNVV…LYVI.

It belongs to the metallophosphoesterase superfamily. A divalent metal cation is required as a cofactor.

The protein localises to the membrane. The polypeptide is Putative metallophosphoesterase At3g03305 (Arabidopsis thaliana (Mouse-ear cress)).